The chain runs to 478 residues: Proline--tRNA ligase (478 aa).

This sequence belongs to the class-II aminoacyl-tRNA synthetase family. ProS type 3 subfamily. In terms of assembly, homodimer.

The protein localises to the cytoplasm. The catalysed reaction is tRNA(Pro) + L-proline + ATP = L-prolyl-tRNA(Pro) + AMP + diphosphate. Its function is as follows. Catalyzes the attachment of proline to tRNA(Pro) in a two-step reaction: proline is first activated by ATP to form Pro-AMP and then transferred to the acceptor end of tRNA(Pro). In Clostridium botulinum (strain Loch Maree / Type A3), this protein is Proline--tRNA ligase.